A 211-amino-acid chain; its full sequence is FMN-dependent NADH:quinone oxidoreductase (211 aa).

FMN is bound by residues Ser17–Ser19 and Met99–Phe102.

The protein belongs to the azoreductase type 1 family. As to quaternary structure, homodimer. It depends on FMN as a cofactor.

The catalysed reaction is 2 a quinone + NADH + H(+) = 2 a 1,4-benzosemiquinone + NAD(+). It carries out the reaction N,N-dimethyl-1,4-phenylenediamine + anthranilate + 2 NAD(+) = 2-(4-dimethylaminophenyl)diazenylbenzoate + 2 NADH + 2 H(+). Functionally, quinone reductase that provides resistance to thiol-specific stress caused by electrophilic quinones. In terms of biological role, also exhibits azoreductase activity. Catalyzes the reductive cleavage of the azo bond in aromatic azo compounds to the corresponding amines. The protein is FMN-dependent NADH:quinone oxidoreductase of Exiguobacterium sp. (strain ATCC BAA-1283 / AT1b).